A 308-amino-acid chain; its full sequence is Methionyl-tRNA formyltransferase (308 aa).

A (6S)-5,6,7,8-tetrahydrofolate-binding site is contributed by 109–112 (SLLP).

The protein belongs to the Fmt family.

The enzyme catalyses L-methionyl-tRNA(fMet) + (6R)-10-formyltetrahydrofolate = N-formyl-L-methionyl-tRNA(fMet) + (6S)-5,6,7,8-tetrahydrofolate + H(+). Attaches a formyl group to the free amino group of methionyl-tRNA(fMet). The formyl group appears to play a dual role in the initiator identity of N-formylmethionyl-tRNA by promoting its recognition by IF2 and preventing the misappropriation of this tRNA by the elongation apparatus. In Caulobacter vibrioides (strain NA1000 / CB15N) (Caulobacter crescentus), this protein is Methionyl-tRNA formyltransferase.